The following is a 270-amino-acid chain: 4-hydroxy-tetrahydrodipicolinate reductase (270 aa).

NAD(+)-binding positions include 9 to 14 and Glu35; that span reads GAGGRM. An NADP(+)-binding site is contributed by Arg36. NAD(+)-binding positions include 99–101 and 123–126; these read GTT and ASNF. Catalysis depends on His156, which acts as the Proton donor/acceptor. His157 contributes to the (S)-2,3,4,5-tetrahydrodipicolinate binding site. Residue Lys160 is the Proton donor of the active site. Residue 166 to 167 participates in (S)-2,3,4,5-tetrahydrodipicolinate binding; it reads GT.

Belongs to the DapB family.

It localises to the cytoplasm. The catalysed reaction is (S)-2,3,4,5-tetrahydrodipicolinate + NAD(+) + H2O = (2S,4S)-4-hydroxy-2,3,4,5-tetrahydrodipicolinate + NADH + H(+). It carries out the reaction (S)-2,3,4,5-tetrahydrodipicolinate + NADP(+) + H2O = (2S,4S)-4-hydroxy-2,3,4,5-tetrahydrodipicolinate + NADPH + H(+). It functions in the pathway amino-acid biosynthesis; L-lysine biosynthesis via DAP pathway; (S)-tetrahydrodipicolinate from L-aspartate: step 4/4. Its function is as follows. Catalyzes the conversion of 4-hydroxy-tetrahydrodipicolinate (HTPA) to tetrahydrodipicolinate. This chain is 4-hydroxy-tetrahydrodipicolinate reductase, found in Haemophilus influenzae (strain ATCC 51907 / DSM 11121 / KW20 / Rd).